Here is a 197-residue protein sequence, read N- to C-terminus: Nucleoside triphosphate pyrophosphatase (197 aa).

The active-site Proton acceptor is aspartate 72.

This sequence belongs to the Maf family. Requires a divalent metal cation as cofactor.

The protein resides in the cytoplasm. It carries out the reaction a ribonucleoside 5'-triphosphate + H2O = a ribonucleoside 5'-phosphate + diphosphate + H(+). The catalysed reaction is a 2'-deoxyribonucleoside 5'-triphosphate + H2O = a 2'-deoxyribonucleoside 5'-phosphate + diphosphate + H(+). In terms of biological role, nucleoside triphosphate pyrophosphatase. May have a dual role in cell division arrest and in preventing the incorporation of modified nucleotides into cellular nucleic acids. This chain is Nucleoside triphosphate pyrophosphatase, found in Corynebacterium glutamicum (strain ATCC 13032 / DSM 20300 / JCM 1318 / BCRC 11384 / CCUG 27702 / LMG 3730 / NBRC 12168 / NCIMB 10025 / NRRL B-2784 / 534).